We begin with the raw amino-acid sequence, 856 residues long: Wall-associated receptor kinase 17 (856 aa).

Positions 1–42 (MPSRSPACRPRGRNRRSAADAVARPLALALILVSTLPRAAHS) are cleaved as a signal peptide. Asn-171 and Asn-234 each carry an N-linked (GlcNAc...) asparagine glycan. The region spanning 297–334 (FEKLCKYGTCVDAPTGAGYLCKCPSGYDGNPYVSDGCQ) is the EGF-like 1 domain. 5 disulfides stabilise this stretch: Cys-301–Cys-306, Cys-319–Cys-333, Cys-339–Cys-353, Cys-347–Cys-362, and Cys-364–Cys-379. Residues 335–380 (DINECRNYNSNNCTYQNLCNNTLGGYTCSCPENNIGDGYRTGTGCN) enclose the EGF-like 2; calcium-binding domain. Asn-346 and Asn-354 each carry an N-linked (GlcNAc...) asparagine glycan. N-linked (GlcNAc...) asparagine glycosylation occurs at Asn-380. The helical transmembrane segment at 452–470 (VLGVSLVLMVTTTTAASCY) threads the bilayer. Positions 527-805 (YSESRILGRG…VLQELRRSFT (279 aa)) constitute a Protein kinase domain. Residues 533–541 (LGRGGQGTV) and Lys-555 each bind ATP. Asp-652 functions as the Proton acceptor in the catalytic mechanism. Residues 816 to 844 (SIQENSEQEEKHLHESRSIPSLQSSEVST) form a disordered region. The span at 823-832 (QEEKHLHESR) shows a compositional bias: basic and acidic residues. Residues 833–844 (SIPSLQSSEVST) show a composition bias toward polar residues.

Belongs to the protein kinase superfamily. Ser/Thr protein kinase family. As to quaternary structure, interacts with WAK17 isoform 2; the interaction is direct. Interacts with LRR5; the interaction is direct. In terms of assembly, interacts with WAK17 isoform 1; the interaction is direct. (Microbial infection) Interacts with G.zeae CFEM1 (via CFEM domain); the interaction is direct. Interacts with G.zeae CFEMN1; the interaction is direct. Interacts with G.zeae CFEM5; the interaction is direct. The cofactor is Mn(2+). Mg(2+) serves as cofactor.

The protein localises to the cell membrane. It carries out the reaction L-seryl-[protein] + ATP = O-phospho-L-seryl-[protein] + ADP + H(+). The catalysed reaction is L-threonyl-[protein] + ATP = O-phospho-L-threonyl-[protein] + ADP + H(+). Functionally, kinase that contributes to activation of the hypersensitive response, a form of programmed cell death, upon fungal infection. Secreted protein that contributes to activation of the hypersensitive response, a form of programmed cell death, upon fungal infection. May sense the presence of fungal material and relay the signal to WAK17 isoform 1. The protein is Wall-associated receptor kinase 17 of Zea mays (Maize).